Reading from the N-terminus, the 244-residue chain is 3-deoxy-manno-octulosonate cytidylyltransferase (244 aa).

The protein belongs to the KdsB family.

It localises to the cytoplasm. It catalyses the reaction 3-deoxy-alpha-D-manno-oct-2-ulosonate + CTP = CMP-3-deoxy-beta-D-manno-octulosonate + diphosphate. It functions in the pathway nucleotide-sugar biosynthesis; CMP-3-deoxy-D-manno-octulosonate biosynthesis; CMP-3-deoxy-D-manno-octulosonate from 3-deoxy-D-manno-octulosonate and CTP: step 1/1. The protein operates within bacterial outer membrane biogenesis; lipopolysaccharide biosynthesis. In terms of biological role, activates KDO (a required 8-carbon sugar) for incorporation into bacterial lipopolysaccharide in Gram-negative bacteria. The polypeptide is 3-deoxy-manno-octulosonate cytidylyltransferase (Synechococcus elongatus (strain ATCC 33912 / PCC 7942 / FACHB-805) (Anacystis nidulans R2)).